Here is an 83-residue protein sequence, read N- to C-terminus: MKTVFAILFLTFIALTCARNYEDLKEKIKNEVEREIFEDLEEESDELENNFKKFNDAKPWTRWIRWKTIVPFIPAVIAAAGKK.

The signal sequence occupies residues 1 to 18; that stretch reads MKTVFAILFLTFIALTCA. A propeptide spanning residues 19–57 is cleaved from the precursor; the sequence is RNYEDLKEKIKNEVEREIFEDLEEESDELENNFKKFNDA. Ala-80 carries the post-translational modification Alanine amide.

This sequence belongs to the arminin family. In terms of tissue distribution, expressed in entodermal epithelium along the body column.

The protein localises to the secreted. It is found in the target cell membrane. Functionally, antimicrobial peptide with a broad-spectrum antimicrobial activity. Keeps its antibacterial activity under a wide range of salt concentrations that mimic physiological conditions of human blood, which is surprising, since Hydra is an obligate freshwater animal with nearly no salt tolerance. Does not affect red blood cells. The sequence is that of Arminin 3a from Hydra vulgaris (Hydra).